Here is a 281-residue protein sequence, read N- to C-terminus: NADPH-dependent 7-cyano-7-deazaguanine reductase (281 aa).

88-90 (IES) contacts substrate. 90 to 91 (SK) is a binding site for NADPH. Catalysis depends on Cys-189, which acts as the Thioimide intermediate. Asp-196 serves as the catalytic Proton donor. 228–229 (HE) contacts substrate. 257–258 (RG) serves as a coordination point for NADPH.

Belongs to the GTP cyclohydrolase I family. QueF type 2 subfamily. Homodimer.

Its subcellular location is the cytoplasm. It catalyses the reaction 7-aminomethyl-7-carbaguanine + 2 NADP(+) = 7-cyano-7-deazaguanine + 2 NADPH + 3 H(+). It functions in the pathway tRNA modification; tRNA-queuosine biosynthesis. In terms of biological role, catalyzes the NADPH-dependent reduction of 7-cyano-7-deazaguanine (preQ0) to 7-aminomethyl-7-deazaguanine (preQ1). The chain is NADPH-dependent 7-cyano-7-deazaguanine reductase from Yersinia pestis bv. Antiqua (strain Antiqua).